The primary structure comprises 391 residues: Isochorismate synthase EntC (391 aa).

The Mg(2+) site is built by T140, T142, V145, and D146. K147 (proton acceptor) is an active-site residue. Residue E197 is the Proton donor of the active site. Isochorismate-binding residues include G214, S215, E241, A303, R347, and G361. Mg(2+) is bound at residue E241. E376 serves as a coordination point for Mg(2+). K380 contacts isochorismate.

The protein belongs to the isochorismate synthase family. Monomer. Forms a specific pairwise interaction with EntB; this interaction likely facilitates substrate channeling to connect the EntB and EntC active sites. Requires Mg(2+) as cofactor.

It catalyses the reaction chorismate = isochorismate. Its pathway is siderophore biosynthesis; enterobactin biosynthesis. Its function is as follows. Involved in the biosynthesis of the siderophore enterobactin (macrocyclic trimeric lactone of N-(2,3-dihydroxybenzoyl)-serine). Catalyzes the reversible conversion of chorismate to isochorismate. The chain is Isochorismate synthase EntC from Escherichia coli O157:H7.